Consider the following 613-residue polypeptide: Putative two-component response regulator ARR21 (613 aa).

The region spanning 17–131 (NVMVVDDDHV…DLTKIYQFAL (115 aa)) is the Response regulatory domain. 4-aspartylphosphate is present on Asp68. Residues 178 to 195 (KSDSRTVNSTNGSCVSTD) show a composition bias toward polar residues. Residues 178–223 (KSDSRTVNSTNGSCVSTDGSRKNRKRKPNGGPSDDGESMSQPAKKK) are disordered. The Nuclear localization signal motif lies at 221 to 224 (KKKK). A DNA-binding region (myb-like GARP) is located at residues 224-274 (KIQWTDSLHDLFLQAIRHIGLDKAVPKKILAFMSVPYLTRENVASHLQKYR).

This sequence belongs to the ARR family. Type-B subfamily. Binds the target DNA as a monomer. In terms of processing, two-component system major event consists of a His-to-Asp phosphorelay between a sensor histidine kinase (HK) and a response regulator (RR). In plants, the His-to-Asp phosphorelay involves an additional intermediate named Histidine-containing phosphotransfer protein (HPt). This multistep phosphorelay consists of a His-Asp-His-Asp sequential transfer of a phosphate group between first a His and an Asp of the HK protein, followed by the transfer to a conserved His of the HPt protein and finally the transfer to an Asp in the receiver domain of the RR protein. Mainly expressed in siliques. Also found in germinating seedlings, stems, flowers and roots, but not in rosette leaves.

The protein resides in the nucleus. In terms of biological role, putative transcriptional activator that binds specifically to the DNA sequence 5'-[AG]GATT-3'. Functions as a response regulator involved in His-to-Asp phosphorelay signal transduction system. Phosphorylation of the Asp residue in the receiver domain activates the ability of the protein to promote the transcription of target genes. Could directly activate some type-A response regulators in response to cytokinins. The protein is Putative two-component response regulator ARR21 (ARR21) of Arabidopsis thaliana (Mouse-ear cress).